The sequence spans 384 residues: Viral protein 1 (384 aa).

The protein is Viral protein 1 of Chaetoceros setoense (Chaetoceros setoense DNA virus).